The sequence spans 135 residues: Large ribosomal subunit protein uL16c (135 aa).

The protein belongs to the universal ribosomal protein uL16 family. In terms of assembly, part of the 50S ribosomal subunit.

The protein localises to the plastid. It is found in the chloroplast. This Aethionema cordifolium (Lebanon stonecress) protein is Large ribosomal subunit protein uL16c.